We begin with the raw amino-acid sequence, 319 residues long: Thioredoxin reductase 1 (319 aa).

Residues 11-14 (SGPA), 40-41 (IA), Gln-45, Asn-54, Val-87, Cys-145, Asp-288, and 295-297 (RQA) each bind FAD. A disulfide bridge links Cys-142 with Cys-145. Position 303 is a phosphoserine (Ser-303).

Belongs to the class-II pyridine nucleotide-disulfide oxidoreductase family. Homodimer. FAD is required as a cofactor.

It is found in the cytoplasm. Its subcellular location is the mitochondrion intermembrane space. The enzyme catalyses [thioredoxin]-dithiol + NADP(+) = [thioredoxin]-disulfide + NADPH + H(+). Central component in the thioredoxin system. Reduces thioredoxins 1 and 2. In Saccharomyces cerevisiae (strain ATCC 204508 / S288c) (Baker's yeast), this protein is Thioredoxin reductase 1 (TRR1).